Consider the following 198-residue polypeptide: Carnitine operon protein CaiE (198 aa).

The disordered stretch occupies residues Lys-174 to Gln-198. Residues Glu-180–Gln-198 are compositionally biased toward basic and acidic residues.

Belongs to the transferase hexapeptide repeat family.

The protein operates within amine and polyamine metabolism; carnitine metabolism. In terms of biological role, overproduction of CaiE stimulates the activity of CaiB and CaiD. In Salmonella dublin (strain CT_02021853), this protein is Carnitine operon protein CaiE.